Reading from the N-terminus, the 137-residue chain is Basic phospholipase A2 homolog MT1 (137 aa).

A signal peptide spans 1 to 16 (MRTLWIVALLLVGVEG). 7 disulfides stabilise this stretch: cysteine 42–cysteine 131, cysteine 44–cysteine 60, cysteine 59–cysteine 111, cysteine 65–cysteine 137, cysteine 66–cysteine 104, cysteine 73–cysteine 97, and cysteine 91–cysteine 102. The important for membrane-damaging activities in eukaryotes and bacteria; heparin-binding stretch occupies residues 121-133 (KKYKAYFKFKCKK).

This sequence belongs to the phospholipase A2 family. Group II subfamily. K49 sub-subfamily. Binds to heparin. As to expression, expressed by the venom gland.

Its subcellular location is the secreted. With respect to regulation, heparin and wedelolactone inhibit the myotoxic activity. The PLA2 inhibitor, para-bromophenacyl bromide (BPB), inhibits the myotoxic activity. In terms of biological role, snake venom phospholipase A2 homolog that lacks enzymatic activity. Has myotoxic activities. A model of myotoxic mechanism has been proposed: an apo Lys49-PLA2 is activated by the entrance of a hydrophobic molecule (e.g. fatty acid) at the hydrophobic channel of the protein leading to a reorientation of a monomer. This reorientation causes a transition between 'inactive' to 'active' states, causing alignment of C-terminal and membrane-docking sites (MDoS) side-by-side and putting the membrane-disruption sites (MDiS) in the same plane, exposed to solvent and in a symmetric position for both monomers. The MDoS region stabilizes the toxin on membrane by the interaction of charged residues with phospholipid head groups. Subsequently, the MDiS region destabilizes the membrane with penetration of hydrophobic residues. This insertion causes a disorganization of the membrane, allowing an uncontrolled influx of ions (i.e. calcium and sodium), and eventually triggering irreversible intracellular alterations and cell death. In Agkistrodon contortrix laticinctus (Broad-banded copperhead), this protein is Basic phospholipase A2 homolog MT1.